The following is a 129-amino-acid chain: Phosphoribosyl-AMP cyclohydrolase (129 aa).

Residue aspartate 76 participates in Mg(2+) binding. Position 77 (cysteine 77) interacts with Zn(2+). Mg(2+) contacts are provided by aspartate 78 and aspartate 80. Zn(2+)-binding residues include cysteine 97 and cysteine 104.

This sequence belongs to the PRA-CH family. In terms of assembly, homodimer. Requires Mg(2+) as cofactor. Zn(2+) is required as a cofactor.

The protein localises to the cytoplasm. It catalyses the reaction 1-(5-phospho-beta-D-ribosyl)-5'-AMP + H2O = 1-(5-phospho-beta-D-ribosyl)-5-[(5-phospho-beta-D-ribosylamino)methylideneamino]imidazole-4-carboxamide. The protein operates within amino-acid biosynthesis; L-histidine biosynthesis; L-histidine from 5-phospho-alpha-D-ribose 1-diphosphate: step 3/9. In terms of biological role, catalyzes the hydrolysis of the adenine ring of phosphoribosyl-AMP. The polypeptide is Phosphoribosyl-AMP cyclohydrolase (Verminephrobacter eiseniae (strain EF01-2)).